Consider the following 219-residue polypeptide: Factor in the germline alpha (219 aa).

The bHLH domain maps to 65–117; it reads ERRRVANAKERERIKNLNRGFARLKALVPFLPQSRKPSKVDILKGATEYIQVL. Residues 124 to 151 form a disordered region; sequence AKDSKKQDPDEQSYSNNSSESHTSSARQ. Low complexity predominate over residues 136 to 148; that stretch reads SYSNNSSESHTSS.

In terms of assembly, heterodimer with TCF3/isoform E12. In terms of tissue distribution, germ cells. Expressed in the fetal ovary, but not by a range of other tissues. Expression increases across mid-gestation, rising some 40-fold by the time of primordial follicle formation.

The protein localises to the nucleus. Its function is as follows. Germline specific transcription factor implicated in postnatal oocyte-specific gene expression. Plays a key regulatory role in the expression of multiple oocyte-specific genes, including those that initiate folliculogenesis and those that encode the zona pellucida (ZP1, ZP2 and ZP3) required for fertilization and early embryonic survival. Essential for oocytes to survive and form primordial follicles. The persistence of FIGLA in adult females suggests that it may regulate additional pathways that are essential for normal ovarian development. Binds to the E-box (5'-CANNTG-3') of the ZPs (ZP1, ZP2, ZP3) promoters. In Homo sapiens (Human), this protein is Factor in the germline alpha (FIGLA).